The chain runs to 237 residues: MGGCDPMDEAARGALDLLGRIGGELGVLGVGTGRTVMRFLREASARGVEPGVAVPSSFETAVELAGLGWSVGDPRVYRGVNVYVDGADEAEPGRGYMVKGGGGALLGEKILSSRSKLNIFIVGEDRLVGRLGEKTPVPVEVEPGFVSMVLASLEELGLNPRVRTSPGKRGPVVSDWGGVIVDLLTGPLEDPRGLESMLRNVPGVRETGLFLGLADYIVVGLSSCGYRVLGPYRGRAV.

Substrate is bound by residues 32-35, 85-88, and 99-102; these read TGRT, DGAD, and KGGG. The active-site Proton acceptor is glutamate 108. Position 126 (arginine 126) interacts with substrate.

Belongs to the ribose 5-phosphate isomerase family. In terms of assembly, homodimer.

It catalyses the reaction aldehydo-D-ribose 5-phosphate = D-ribulose 5-phosphate. It functions in the pathway carbohydrate degradation; pentose phosphate pathway; D-ribose 5-phosphate from D-ribulose 5-phosphate (non-oxidative stage): step 1/1. Functionally, catalyzes the reversible conversion of ribose-5-phosphate to ribulose 5-phosphate. In Aeropyrum pernix (strain ATCC 700893 / DSM 11879 / JCM 9820 / NBRC 100138 / K1), this protein is Ribose-5-phosphate isomerase A.